The primary structure comprises 704 residues: Pentatricopeptide repeat-containing protein At4g28010 (704 aa).

PPR repeat units follow at residues 71–105, 106–140, 141–175, 176–210, 211–245, 246–280, 281–315, 316–350, 351–385, 386–416, 423–453, 458–492, 493–527, 528–562, 563–597, 598–632, and 633–667; these read LAFA…DTFI, NFVS…GFAF, NVYN…SLMP, DVFS…GCSW, SLVT…GLEA, DLVV…GDSP, CAIT…GVRP, NVYT…DEEP, NAVT…RTRP, DNIT…MLKD, DVIS…LVEK, DRVT…KIVR, NSDT…ELQP, SVFD…NNFP, DVVS…GLSP, DLFT…GFEP, and DAHI…DIVL.

Belongs to the PPR family. P subfamily.

The polypeptide is Pentatricopeptide repeat-containing protein At4g28010 (Arabidopsis thaliana (Mouse-ear cress)).